A 445-amino-acid polypeptide reads, in one-letter code: D-serine transporter DsdX (445 aa).

12 consecutive transmembrane segments (helical) span residues 5-25 (IWVV…IVKF), 29-49 (PFLA…MGPL), 57-77 (SGIG…TILG), 106-126 (VLVG…VLLI), 140-160 (LLKL…VVPP), 178-198 (VIVY…PLFL), 224-244 (TLPS…LMLV), 265-285 (IGNP…VLGI), 302-322 (FGSI…NAIL), 343-363 (ILLA…ATVA), 385-405 (IIAI…DSLF), and 425-445 (TATF…SFII).

This sequence belongs to the GntP permease family.

It is found in the cell inner membrane. With respect to regulation, uptake of D-serine is inhibited by carbonyl cyanide m-chlorophenylhydrazone (CCCP), and at high concentrations of D-threonine, stimulated by D-cycloserine and not affected by D-alanine or glycine. Functionally, protein that allows transport of D-serine across the inner membrane, does not transport D-alanine nor probably glycine. Is probably a H(+) symporter, as CCCP inhibits transport. Transports D-serine more efficiently than CycA. The protein is D-serine transporter DsdX (dsdX) of Escherichia coli O6:H1 (strain CFT073 / ATCC 700928 / UPEC).